The sequence spans 109 residues: Small ribosomal subunit protein uS17 (109 aa).

The protein belongs to the universal ribosomal protein uS17 family. Part of the 30S ribosomal subunit.

Its function is as follows. One of the primary rRNA binding proteins, it binds specifically to the 5'-end of 16S ribosomal RNA. The chain is Small ribosomal subunit protein uS17 from Methanococcus vannielii.